The chain runs to 158 residues: 6,7-dimethyl-8-ribityllumazine synthase (158 aa).

Residues F24, 58–60 (AFE), and 82–84 (AVI) each bind 5-amino-6-(D-ribitylamino)uracil. 87 to 88 (GT) provides a ligand contact to (2S)-2-hydroxy-3-oxobutyl phosphate. H90 functions as the Proton donor in the catalytic mechanism. F115 contributes to the 5-amino-6-(D-ribitylamino)uracil binding site. R129 lines the (2S)-2-hydroxy-3-oxobutyl phosphate pocket.

It belongs to the DMRL synthase family. As to quaternary structure, forms an icosahedral capsid composed of 60 subunits, arranged as a dodecamer of pentamers.

It catalyses the reaction (2S)-2-hydroxy-3-oxobutyl phosphate + 5-amino-6-(D-ribitylamino)uracil = 6,7-dimethyl-8-(1-D-ribityl)lumazine + phosphate + 2 H2O + H(+). The protein operates within cofactor biosynthesis; riboflavin biosynthesis; riboflavin from 2-hydroxy-3-oxobutyl phosphate and 5-amino-6-(D-ribitylamino)uracil: step 1/2. Catalyzes the formation of 6,7-dimethyl-8-ribityllumazine by condensation of 5-amino-6-(D-ribitylamino)uracil with 3,4-dihydroxy-2-butanone 4-phosphate. This is the penultimate step in the biosynthesis of riboflavin. The chain is 6,7-dimethyl-8-ribityllumazine synthase from Pseudomonas putida (strain GB-1).